A 224-amino-acid chain; its full sequence is Adenosylcobinamide-GDP ribazoletransferase (224 aa).

The next 4 helical transmembrane spans lie at 21–41, 44–64, 97–117, and 156–176; these read LSFK…AAIP, LLYL…ATGL, GGIF…HSPL, and WPAA…TTAV.

It belongs to the CobS family. Mg(2+) is required as a cofactor.

The protein localises to the cell membrane. It catalyses the reaction alpha-ribazole + adenosylcob(III)inamide-GDP = adenosylcob(III)alamin + GMP + H(+). The enzyme catalyses alpha-ribazole 5'-phosphate + adenosylcob(III)inamide-GDP = adenosylcob(III)alamin 5'-phosphate + GMP + H(+). It participates in cofactor biosynthesis; adenosylcobalamin biosynthesis; adenosylcobalamin from cob(II)yrinate a,c-diamide: step 7/7. Functionally, joins adenosylcobinamide-GDP and alpha-ribazole to generate adenosylcobalamin (Ado-cobalamin). Also synthesizes adenosylcobalamin 5'-phosphate from adenosylcobinamide-GDP and alpha-ribazole 5'-phosphate. The protein is Adenosylcobinamide-GDP ribazoletransferase of Pyrobaculum aerophilum (strain ATCC 51768 / DSM 7523 / JCM 9630 / CIP 104966 / NBRC 100827 / IM2).